The following is a 582-amino-acid chain: 2-succinyl-5-enolpyruvyl-6-hydroxy-3-cyclohexene-1-carboxylate synthase (582 aa).

This sequence belongs to the TPP enzyme family. MenD subfamily. As to quaternary structure, homodimer. It depends on Mg(2+) as a cofactor. Requires Mn(2+) as cofactor. Thiamine diphosphate serves as cofactor.

It carries out the reaction isochorismate + 2-oxoglutarate + H(+) = 5-enolpyruvoyl-6-hydroxy-2-succinyl-cyclohex-3-ene-1-carboxylate + CO2. Its pathway is quinol/quinone metabolism; 1,4-dihydroxy-2-naphthoate biosynthesis; 1,4-dihydroxy-2-naphthoate from chorismate: step 2/7. The protein operates within quinol/quinone metabolism; menaquinone biosynthesis. In terms of biological role, catalyzes the thiamine diphosphate-dependent decarboxylation of 2-oxoglutarate and the subsequent addition of the resulting succinic semialdehyde-thiamine pyrophosphate anion to isochorismate to yield 2-succinyl-5-enolpyruvyl-6-hydroxy-3-cyclohexene-1-carboxylate (SEPHCHC). In Chlorobaculum tepidum (strain ATCC 49652 / DSM 12025 / NBRC 103806 / TLS) (Chlorobium tepidum), this protein is 2-succinyl-5-enolpyruvyl-6-hydroxy-3-cyclohexene-1-carboxylate synthase.